We begin with the raw amino-acid sequence, 131 residues long: Leptin receptor gene-related protein (131 aa).

4 helical membrane passes run 7 to 27, 32 to 52, 69 to 89, and 100 to 120; these read LVGL…GCAL, VYWP…HFIA, LAYF…IILA, and GLVL…FLVF.

The protein belongs to the OB-RGRP/VPS55 family.

It is found in the golgi apparatus membrane. It localises to the endosome membrane. Involved in protein trafficking. May be involved in the down-regulation of membrane protein levels. The polypeptide is Leptin receptor gene-related protein (LEPROT) (Gallus gallus (Chicken)).